A 340-amino-acid polypeptide reads, in one-letter code: Putative methionyl-tRNA formyltransferase (340 aa).

This sequence belongs to the Fmt family.

It is found in the mitochondrion. The protein localises to the mitochondrion matrix. The protein resides in the cytoplasm. It carries out the reaction L-methionyl-tRNA(fMet) + (6R)-10-formyltetrahydrofolate = N-formyl-L-methionyl-tRNA(fMet) + (6S)-5,6,7,8-tetrahydrofolate + H(+). Formylates methionyl-tRNA in mitochondria and the cytoplasm. Responsible for the formylation of the N-terminally formylated (Nt-formylated) mitochondrial matrix proteins that are encoded by mitochondrial DNA. Nt-formylated proteins in the cytoplasm are strongly up-regulated in stationary phase or upon starvation for specific amino acids and are targeted for degradation by an E3 ubiquitin ligase-mediated fMet/N-end rule pathway. Increased Nt-formylation of cytosolic proteins appears to be important for adaptation to these stresses. The chain is Putative methionyl-tRNA formyltransferase (fmt1) from Schizosaccharomyces pombe (strain 972 / ATCC 24843) (Fission yeast).